A 220-amino-acid polypeptide reads, in one-letter code: Regulatory protein VanRB (220 aa).

A Response regulatory domain is found at Arg4–Leu117. Asp53 is modified (4-aspartylphosphate). The ompR/PhoB-type DNA-binding region spans Ala124–Glu218.

Post-translationally, may be phosphorylated by VanSB. May also be dephosphorylated by VanSB.

Its subcellular location is the cytoplasm. In terms of biological role, member of the two-component regulatory system VanSB/VanRB. Activates the transcription of vanSB, vanYB and vanW in response to vancomycin which results in vancomycin resistance. The chain is Regulatory protein VanRB (vanRB) from Enterococcus faecalis (strain ATCC 700802 / V583).